A 513-amino-acid chain; its full sequence is Pantetheinase (513 aa).

An N-terminal signal peptide occupies residues 1 to 21; it reads MTTQLPAYVAILLFYVSRASC. Asn-38 carries N-linked (GlcNAc...) asparagine glycosylation. In terms of domain architecture, CN hydrolase spans 39–306; sequence ATLTPVSREE…GKLLLSQLDS (268 aa). The active-site Proton acceptor is Glu-79. Asn-130 carries N-linked (GlcNAc...) asparagine glycosylation. Lys-178 serves as the catalytic Proton donor. Residue Asn-200 is glycosylated (N-linked (GlcNAc...) asparagine). Cys-211 functions as the Nucleophile in the catalytic mechanism. 3 N-linked (GlcNAc...) asparagine glycosylation sites follow: Asn-283, Asn-315, and Asn-353. The GPI-anchor amidated glycine moiety is linked to residue Gly-491. A propeptide spans 492–513 (removed in mature form); the sequence is LTAQARIIMLIVIAPIVCSLSW.

Belongs to the carbon-nitrogen hydrolase superfamily. BTD/VNN family. Monomer. In terms of tissue distribution, widely expressed with higher expression in spleen, kidney and blood. Overexpressed in lesional psoriatic skin.

The protein resides in the cell membrane. It catalyses the reaction (R)-pantetheine + H2O = cysteamine + (R)-pantothenate. Amidohydrolase that hydrolyzes specifically one of the carboamide linkages in D-pantetheine thus recycling pantothenic acid (vitamin B5) and releasing cysteamine. The sequence is that of Pantetheinase (VNN1) from Homo sapiens (Human).